Reading from the N-terminus, the 142-residue chain is Large ribosomal subunit protein uL13 (142 aa).

This sequence belongs to the universal ribosomal protein uL13 family. Part of the 50S ribosomal subunit.

In terms of biological role, this protein is one of the early assembly proteins of the 50S ribosomal subunit, although it is not seen to bind rRNA by itself. It is important during the early stages of 50S assembly. This Citrifermentans bemidjiense (strain ATCC BAA-1014 / DSM 16622 / JCM 12645 / Bem) (Geobacter bemidjiensis) protein is Large ribosomal subunit protein uL13.